The sequence spans 182 residues: ATP-dependent protease subunit HslV (182 aa).

Threonine 12 is a catalytic residue. Residues alanine 167, cysteine 170, and threonine 173 each contribute to the Na(+) site.

Belongs to the peptidase T1B family. HslV subfamily. A double ring-shaped homohexamer of HslV is capped on each side by a ring-shaped HslU homohexamer. The assembly of the HslU/HslV complex is dependent on binding of ATP.

It is found in the cytoplasm. It catalyses the reaction ATP-dependent cleavage of peptide bonds with broad specificity.. Its activity is regulated as follows. Allosterically activated by HslU binding. Protease subunit of a proteasome-like degradation complex believed to be a general protein degrading machinery. In Paramagnetospirillum magneticum (strain ATCC 700264 / AMB-1) (Magnetospirillum magneticum), this protein is ATP-dependent protease subunit HslV.